The primary structure comprises 263 residues: Linear gramicidin dehydrogenase LgrE (263 aa).

Residue Ser96 is part of the active site.

This sequence belongs to the thioesterase family.

In terms of biological role, in the final step of gramicidin biosynthesis, reduces the pentadecapeptide-aldehyde intermediate, that is released from the terminal module of the non-ribosomal peptide synthetase LgrD, to the final product ethanolamine-containing gramicidin. The sequence is that of Linear gramicidin dehydrogenase LgrE (lgrE) from Brevibacillus parabrevis.